The primary structure comprises 463 residues: tRNA (guanine(10)-N(2))-methyltransferase TRMT11 (463 aa).

At Ala2 the chain carries N-acetylalanine.

The protein belongs to the class I-like SAM-binding methyltransferase superfamily. TRM11 methyltransferase family. Part of the heterodimeric TRMT11-TRM112 methyltransferase complex; this complex forms an active tRNA methyltransferase, where TRMT112 acts as an activator of the catalytic subunit TRMT11.

The protein resides in the cytoplasm. It carries out the reaction guanosine(10) in tRNA + S-adenosyl-L-methionine = N(2)-methylguanosine(10) in tRNA + S-adenosyl-L-homocysteine + H(+). Its function is as follows. Catalytic subunit of the TRMT11-TRM112 methyltransferase complex, that specifically mediates the S-adenosyl-L-methionine-dependent N(2)-methylation of guanosine nucleotide at position 10 (m2G10) in tRNAs. This is one of the major tRNA (guanine-N(2))-methyltransferases. This is tRNA (guanine(10)-N(2))-methyltransferase TRMT11 from Pongo abelii (Sumatran orangutan).